The primary structure comprises 910 residues: Chitin synthase A (910 aa).

The interval 56 to 156 (NYHDDYDPRP…EPAPTPTPAP (101 aa)) is disordered. Basic and acidic residues-rich tracts occupy residues 57-84 (YHDDYDPRPGGRRHDSDYSLDPNAHHDA) and 130-148 (DPHDPDRDPHPDDPFHDEP). Transmembrane regions (helical) follow at residues 366–386 (WFFQAFGQVLDPNICVLIDAG), 448–468 (SAFGFITVLPGAFSAYRYVAL), 583–603 (VYQTISMLFAWFALGNFFLVF), 620–640 (VLFIVFEWLYIAVLITCFILS), 655–675 (MVYFWGVIMAYLMFASIFITV), 701–721 (TLIISLLSTYVMWLVVSIIFL), 730–750 (FIQYLLMTPTYINILNVYAFC), 828–848 (GVVLFWMFCNLALTALVLQAG), and 876–896 (LYSVAGLAAFRFIGAMWFLVV).

Belongs to the chitin synthase family. Class I subfamily.

The protein resides in the cell membrane. It catalyses the reaction [(1-&gt;4)-N-acetyl-beta-D-glucosaminyl](n) + UDP-N-acetyl-alpha-D-glucosamine = [(1-&gt;4)-N-acetyl-beta-D-glucosaminyl](n+1) + UDP + H(+). Polymerizes chitin, a structural polymer of the cell wall and septum, by transferring the sugar moiety of UDP-GlcNAc to the non-reducing end of the growing chitin polymer. The polypeptide is Chitin synthase A (CHSA) (Ampelomyces quisqualis (Powdery mildew agent)).